Reading from the N-terminus, the 83-residue chain is Small ribosomal subunit protein bS20 (83 aa).

Belongs to the bacterial ribosomal protein bS20 family.

Its function is as follows. Binds directly to 16S ribosomal RNA. The protein is Small ribosomal subunit protein bS20 of Flavobacterium johnsoniae (strain ATCC 17061 / DSM 2064 / JCM 8514 / BCRC 14874 / CCUG 350202 / NBRC 14942 / NCIMB 11054 / UW101) (Cytophaga johnsonae).